Here is an 88-residue protein sequence, read N- to C-terminus: UPF0250 protein swp_3927 (88 aa).

This sequence belongs to the UPF0250 family.

The sequence is that of UPF0250 protein swp_3927 from Shewanella piezotolerans (strain WP3 / JCM 13877).